Reading from the N-terminus, the 342-residue chain is N-acetyl-gamma-glutamyl-phosphate reductase (342 aa).

Cys-149 is a catalytic residue.

Belongs to the NAGSA dehydrogenase family. Type 1 subfamily.

The protein localises to the cytoplasm. It catalyses the reaction N-acetyl-L-glutamate 5-semialdehyde + phosphate + NADP(+) = N-acetyl-L-glutamyl 5-phosphate + NADPH + H(+). It participates in amino-acid biosynthesis; L-arginine biosynthesis; N(2)-acetyl-L-ornithine from L-glutamate: step 3/4. Functionally, catalyzes the NADPH-dependent reduction of N-acetyl-5-glutamyl phosphate to yield N-acetyl-L-glutamate 5-semialdehyde. The protein is N-acetyl-gamma-glutamyl-phosphate reductase of Roseobacter denitrificans (strain ATCC 33942 / OCh 114) (Erythrobacter sp. (strain OCh 114)).